A 178-amino-acid chain; its full sequence is MSENQNPPPSPEEIEAAMSANAADELNRLQGELAELKAKSADLADQFLRAKAEAENARRRAEDEVAKARKFGIESFAESLLPVCDSLDAALAIENATAEQLREGSDATLRQLMSALERNKVVIVNPEAGTKFDPHQHQAISMVPADQEANTVVSVLQKGYLIFDRVLRPALVTVAAPK.

The segment covering M1–P11 has biased composition (pro residues). The interval M1–A23 is disordered.

This sequence belongs to the GrpE family. Homodimer.

It localises to the cytoplasm. In terms of biological role, participates actively in the response to hyperosmotic and heat shock by preventing the aggregation of stress-denatured proteins, in association with DnaK and GrpE. It is the nucleotide exchange factor for DnaK and may function as a thermosensor. Unfolded proteins bind initially to DnaJ; upon interaction with the DnaJ-bound protein, DnaK hydrolyzes its bound ATP, resulting in the formation of a stable complex. GrpE releases ADP from DnaK; ATP binding to DnaK triggers the release of the substrate protein, thus completing the reaction cycle. Several rounds of ATP-dependent interactions between DnaJ, DnaK and GrpE are required for fully efficient folding. This is Protein GrpE from Acidovorax sp. (strain JS42).